Consider the following 448-residue polypeptide: Methylenetetrahydrofolate--tRNA-(uracil-5-)-methyltransferase TrmFO (448 aa).

13 to 18 (GAGLAG) lines the FAD pocket.

Belongs to the MnmG family. TrmFO subfamily. The cofactor is FAD.

Its subcellular location is the cytoplasm. The catalysed reaction is uridine(54) in tRNA + (6R)-5,10-methylene-5,6,7,8-tetrahydrofolate + NADH + H(+) = 5-methyluridine(54) in tRNA + (6S)-5,6,7,8-tetrahydrofolate + NAD(+). The enzyme catalyses uridine(54) in tRNA + (6R)-5,10-methylene-5,6,7,8-tetrahydrofolate + NADPH + H(+) = 5-methyluridine(54) in tRNA + (6S)-5,6,7,8-tetrahydrofolate + NADP(+). Functionally, catalyzes the folate-dependent formation of 5-methyl-uridine at position 54 (M-5-U54) in all tRNAs. This Streptococcus pyogenes serotype M5 (strain Manfredo) protein is Methylenetetrahydrofolate--tRNA-(uracil-5-)-methyltransferase TrmFO.